Consider the following 674-residue polypeptide: Glutaminase kidney isoform, mitochondrial (674 aa).

A mitochondrion-targeting transit peptide spans 1-54 (MMRLRGSAMLRELLLRPPAAVGGVLRRTQPLGTLCRRPRGGSRPAAGLVAAARL). Positions 56 to 123 (PWWGGGGRAK…PGETDAFGNS (68 aa)) are disordered. Over residues 58–71 (WGGGGRAKGPGSGG) the composition is skewed to gly residues. Over residues 89–101 (PPQQQQQQQQQPG) the composition is skewed to low complexity. N6-succinyllysine occurs at positions 135 and 169. Ser-291 serves as a coordination point for substrate. Lys-316 carries the post-translational modification N6-acetyllysine. Residues 320–327 (GLRFNKLF) form a highly mobile activation loop region. Residues Asn-340, Glu-386, Asn-393, Tyr-419, Tyr-471, and Val-489 each coordinate substrate. 2 ANK repeats span residues 590–619 (DSRT…VNPF) and 624–653 (WNNT…QYTP). Positions 652–674 (TPQGDSDDGKENQTVHKNLDGLL) are disordered. Ser-657 carries the phosphoserine modification. Positions 658-674 (DDGKENQTVHKNLDGLL) are enriched in basic and acidic residues.

Belongs to the glutaminase family. Homotetramer, dimer of dimers. Tetramer composed of 68 and 65 kDa peptides in a 1:3 ratio. Can assemble into higher oligomers (in vitro), but the physiological significance of this is not clear. Interacts with RAF1 and MAP2K2. Interacts with ATCAY; the interaction is direct and may control GLS localization, negatively regulating its activity. Synthesized as a 74-kDa cytosolic precursor which is proteolytically processed by the mitochondrial-processing peptidase (MPP) via a 72-kDa intermediate to yield the mature mitochondrial 68- and 65-kDa subunits. As to expression, kidney, brain, and intestine.

The protein resides in the mitochondrion. Its subcellular location is the cytoplasm. The protein localises to the cytosol. It is found in the mitochondrion matrix. It catalyses the reaction L-glutamine + H2O = L-glutamate + NH4(+). Enzyme activity is increased by phosphate, due to increased kcat and increased substrate affinity. Catalyzes the first reaction in the primary pathway for the renal catabolism of glutamine. Plays a role in maintaining acid-base homeostasis. Regulates the levels of the neurotransmitter glutamate, the main excitatory neurotransmitter in the brain. This is Glutaminase kidney isoform, mitochondrial (Gls) from Rattus norvegicus (Rat).